Here is a 349-residue protein sequence, read N- to C-terminus: Short-wave-sensitive opsin 1 (349 aa).

The Extracellular portion of the chain corresponds to 1–34 (MSKMSEEEEFLLFKNISLVGPWDGPQYHLAPVWA). Asn-15 carries N-linked (GlcNAc...) asparagine glycosylation. A helical membrane pass occupies residues 35 to 59 (FHLQAVFMGFVFFVGTPLNATVLVA). At 60 to 71 (TLRYRKLRQPLN) the chain is on the cytoplasmic side. Residues 72 to 97 (YILVNVSLGGFIYCIFSVFIVFITSC) traverse the membrane as a helical segment. Residues 98–111 (YGYFVFGRHVCALE) are Extracellular-facing. Cys-108 and Cys-185 form a disulfide bridge. A helical membrane pass occupies residues 112–131 (AFLGCTAGLVTGWSLAFLAF). Over 132–150 (ERYIIICKPFGNFRFSSKH) the chain is Cytoplasmic. Residues 151-174 (ALMVVVATWTIGIGVSIPPFFGWS) form a helical membrane-spanning segment. At 175–200 (RFVPEGLQCSCGPDWYTVGTKYYSEY) the chain is on the extracellular side. A helical transmembrane segment spans residues 201–228 (YTWFLFIFCYIVPLSLICFSYSQLLGAL). At 229 to 250 (RAVAAQQQESASTQKAEREVSH) the chain is on the cytoplasmic side. Residues 251 to 274 (MVVVMVGSFCLCYTPYAALAMYIV) form a helical membrane-spanning segment. Topologically, residues 275 to 282 (NNRNHGVD) are extracellular. The helical transmembrane segment at 283–307 (LRLVTIPAFFSKSACVYNPIIYCFM) threads the bilayer. An N6-(retinylidene)lysine modification is found at Lys-294. Residues 308–349 (NKQFRACIMEMVCGKPMTDESELSSSQKTEVSTVSSSQVGPN) lie on the Cytoplasmic side of the membrane. The disordered stretch occupies residues 327 to 349 (ESELSSSQKTEVSTVSSSQVGPN). Positions 330 to 349 (LSSSQKTEVSTVSSSQVGPN) are enriched in polar residues.

This sequence belongs to the G-protein coupled receptor 1 family. Opsin subfamily. In terms of processing, phosphorylated on some or all of the serine and threonine residues present in the C-terminal region.

It is found in the cell membrane. The protein localises to the photoreceptor inner segment. It localises to the cell projection. The protein resides in the cilium. Its subcellular location is the photoreceptor outer segment. It is found in the cytoplasm. The protein localises to the perinuclear region. Its function is as follows. Visual pigments are the light-absorbing molecules that mediate vision. They consist of an apoprotein, opsin, covalently linked to cis-retinal. Required for the maintenance of cone outer segment organization in the ventral retina, but not essential for the maintenance of functioning cone photoreceptors. Involved in ensuring correct abundance and localization of retinal membrane proteins. May increase spectral sensitivity in dim light. This Bos taurus (Bovine) protein is Short-wave-sensitive opsin 1 (OPN1SW).